Consider the following 745-residue polypeptide: 5-methyltetrahydropteroyltriglutamate--homocysteine methyltransferase (745 aa).

5-methyltetrahydropteroyltri-L-glutamate-binding positions include arginine 19–lysine 22 and lysine 119. L-homocysteine contacts are provided by residues isoleucine 418 to serine 420 and glutamate 471. Residues isoleucine 418 to serine 420 and glutamate 471 contribute to the L-methionine site. Residues arginine 502 to cysteine 503 and tryptophan 548 each bind 5-methyltetrahydropteroyltri-L-glutamate. Position 586 (aspartate 586) interacts with L-homocysteine. Aspartate 586 contributes to the L-methionine binding site. Residue glutamate 592 coordinates 5-methyltetrahydropteroyltri-L-glutamate. Residues histidine 628, cysteine 630, and glutamate 652 each coordinate Zn(2+). The Proton donor role is filled by histidine 681. Residue cysteine 713 participates in Zn(2+) binding.

This sequence belongs to the vitamin-B12 independent methionine synthase family. It depends on Zn(2+) as a cofactor.

It carries out the reaction 5-methyltetrahydropteroyltri-L-glutamate + L-homocysteine = tetrahydropteroyltri-L-glutamate + L-methionine. The protein operates within amino-acid biosynthesis; L-methionine biosynthesis via de novo pathway; L-methionine from L-homocysteine (MetE route): step 1/1. Functionally, catalyzes the transfer of a methyl group from 5-methyltetrahydrofolate to homocysteine resulting in methionine formation. The polypeptide is 5-methyltetrahydropteroyltriglutamate--homocysteine methyltransferase (Corynebacterium glutamicum (strain R)).